The sequence spans 503 residues: Glutamyl-tRNA(Gln) amidotransferase subunit A (503 aa).

Active-site charge relay system residues include lysine 79 and serine 154. The active-site Acyl-ester intermediate is serine 178.

Belongs to the amidase family. GatA subfamily. Heterotrimer of A, B and C subunits.

The catalysed reaction is L-glutamyl-tRNA(Gln) + L-glutamine + ATP + H2O = L-glutaminyl-tRNA(Gln) + L-glutamate + ADP + phosphate + H(+). Functionally, allows the formation of correctly charged Gln-tRNA(Gln) through the transamidation of misacylated Glu-tRNA(Gln) in organisms which lack glutaminyl-tRNA synthetase. The reaction takes place in the presence of glutamine and ATP through an activated gamma-phospho-Glu-tRNA(Gln). In Agathobacter rectalis (strain ATCC 33656 / DSM 3377 / JCM 17463 / KCTC 5835 / VPI 0990) (Eubacterium rectale), this protein is Glutamyl-tRNA(Gln) amidotransferase subunit A.